The following is a 313-amino-acid chain: Carbamate kinase 2 (313 aa).

This sequence belongs to the carbamate kinase family.

It is found in the cytoplasm. It carries out the reaction hydrogencarbonate + NH4(+) + ATP = carbamoyl phosphate + ADP + H2O + H(+). It participates in metabolic intermediate metabolism; carbamoyl phosphate degradation; CO(2) and NH(3) from carbamoyl phosphate: step 1/1. The protein is Carbamate kinase 2 (arcC2) of Staphylococcus aureus (strain USA300).